We begin with the raw amino-acid sequence, 312 residues long: Ribosomal protein L11 methyltransferase (312 aa).

S-adenosyl-L-methionine is bound by residues Thr-160, Gly-181, Asp-203, and Asn-246.

The protein belongs to the methyltransferase superfamily. PrmA family.

It localises to the cytoplasm. The catalysed reaction is L-lysyl-[protein] + 3 S-adenosyl-L-methionine = N(6),N(6),N(6)-trimethyl-L-lysyl-[protein] + 3 S-adenosyl-L-homocysteine + 3 H(+). Methylates ribosomal protein L11. This Staphylococcus carnosus (strain TM300) protein is Ribosomal protein L11 methyltransferase.